A 419-amino-acid chain; its full sequence is Adenylosuccinate synthetase (419 aa).

Residues 12–18 and 40–42 each bind GTP; these read GDEGKGK and GHT. The active-site Proton acceptor is D13. Residues D13 and G40 each coordinate Mg(2+). Residues 13-16, 38-41, T128, R142, Q220, T235, and R299 contribute to the IMP site; these read DEGK and NAGH. Residue H41 is the Proton donor of the active site. A substrate-binding site is contributed by 295 to 301; sequence SITKRPR. GTP contacts are provided by residues R301, 327–329, and 407–409; these read KSD and SLG.

The protein belongs to the adenylosuccinate synthetase family. In terms of assembly, homodimer. Mg(2+) serves as cofactor.

It is found in the cytoplasm. The catalysed reaction is IMP + L-aspartate + GTP = N(6)-(1,2-dicarboxyethyl)-AMP + GDP + phosphate + 2 H(+). The protein operates within purine metabolism; AMP biosynthesis via de novo pathway; AMP from IMP: step 1/2. In terms of biological role, plays an important role in the de novo pathway of purine nucleotide biosynthesis. Catalyzes the first committed step in the biosynthesis of AMP from IMP. This chain is Adenylosuccinate synthetase, found in Azobacteroides pseudotrichonymphae genomovar. CFP2.